A 360-amino-acid chain; its full sequence is Tyrosine-protein phosphatase non-receptor type 7 (360 aa).

Positions 1–37 are disordered; it reads MVQAHGGRSRAQPLTLSLGAAMTQPPPEKTPAKKHVR. Positions 38–51 are interaction with MAP kinases; it reads LQERRGSNVALMLD. Ser44 is modified (phosphoserine). Thr66 carries the post-translational modification Phosphothreonine. 3 positions are modified to phosphoserine: Ser93, Ser110, and Ser143. The region spanning 97-350 is the Tyrosine-protein phosphatase domain; it reads LEEEFLKIPS…QFLHHTLALY (254 aa). Residues Asp257, 291-297, and Gln335 contribute to the substrate site; that span reads CSAGIGR. The Phosphocysteine intermediate role is filled by Cys291. Cys291 carries the cysteine sulfenic acid (-SOH) modification.

This sequence belongs to the protein-tyrosine phosphatase family. Non-receptor class subfamily. Monomer. Interacts with MAPK1, MAPK3 and several other MAP kinases. Post-translationally, phosphorylated on serine residues in resting T-cells. Phosphorylation increases upon exposure to stimuli that increase intracellular cAMP levels. Phosphorylation leads to dissociation of bound MAP kinases. In terms of processing, oxidized at active site cysteine. Treatment with pervanadate (vanadate and H(2)O(2)) or with antigen enhanced oxidation of active site cysteine. In terms of tissue distribution, expressed exclusively in thymus and spleen.

The protein resides in the cytoplasm. It localises to the cytoskeleton. The enzyme catalyses O-phospho-L-tyrosyl-[protein] + H2O = L-tyrosyl-[protein] + phosphate. Inhibited in cells after FCER1A triggering. Its function is as follows. Protein phosphatase that acts preferentially on tyrosine-phosphorylated MAPK1. Plays a role in the regulation of T and B-lymphocyte development and signal transduction. The polypeptide is Tyrosine-protein phosphatase non-receptor type 7 (PTPN7) (Homo sapiens (Human)).